Reading from the N-terminus, the 159-residue chain is UPF0225 protein plu2503 (159 aa).

It belongs to the UPF0225 family.

This Photorhabdus laumondii subsp. laumondii (strain DSM 15139 / CIP 105565 / TT01) (Photorhabdus luminescens subsp. laumondii) protein is UPF0225 protein plu2503.